Reading from the N-terminus, the 220-residue chain is Inner membrane protein YqjA (220 aa).

At 1-27 (MELLTQLLQALWAQDFETLANPSMIGM) the chain is on the periplasmic side. Residues 28 to 48 (LYFVLFVILFLENGLLPAAFL) traverse the membrane as a helical segment. The Cytoplasmic portion of the chain corresponds to 49 to 52 (PGDS). The next 2 helical transmembrane spans lie at 53 to 73 (LLVL…QTIL) and 74 to 94 (LLTV…RWLG). At 95–154 (NTRTVQNWLSHLPAHYHQRAHHLFHKHGLSALLIGRFIAFVRTLLPTIAGLSGLNNARFQ) the chain is on the cytoplasmic side. Residues 155–175 (FFNWMSGLLWVLILTTLGYML) form a helical membrane-spanning segment. The Periplasmic segment spans residues 176 to 191 (GKTPVFLKYEDQLMSC). Residues 192–212 (LMLLPVVLLVFGLAGSLVVLW) traverse the membrane as a helical segment. At 213 to 220 (KKKYGNRG) the chain is on the cytoplasmic side.

This sequence belongs to the DedA family.

The protein resides in the cell inner membrane. In terms of biological role, may be a membrane transporter required for proton motive force (PMF)-dependent drug efflux. Required, with YghB, for the proper export of certain periplasmic amidases and, possibly, other Tat substrates. May play a role in determining membrane lipid composition. This Escherichia coli (strain K12) protein is Inner membrane protein YqjA (yqjA).